Here is a 653-residue protein sequence, read N- to C-terminus: Beta-galactosidase-1-like protein 3 (653 aa).

Glu227 (proton donor) is an active-site residue. The Nucleophile role is filled by Glu301.

Belongs to the glycosyl hydrolase 35 family.

In Homo sapiens (Human), this protein is Beta-galactosidase-1-like protein 3 (GLB1L3).